The following is a 172-amino-acid chain: MVINFEELHPQERAELERNIFFSTLEQLKGWARSNSLWPMTFGLACCAIEMMGVGSSHYDLDRFGSFFRTSPRQSDVMIVSGTVTKKMAPIVRRLYDQMPEPKWVIAMGSCATAGGPYVNSYAVVKGVDQIVPVDVYIPGCPPNPAALIYGINKLKEKIRYEARTGKQVTNK.

[4Fe-4S] cluster-binding residues include Cys46, Cys47, Cys111, and Cys141.

Belongs to the complex I 20 kDa subunit family. As to quaternary structure, NDH-1 is composed of 14 different subunits. Subunits NuoB, C, D, E, F, and G constitute the peripheral sector of the complex. [4Fe-4S] cluster serves as cofactor.

It localises to the cell membrane. The enzyme catalyses a quinone + NADH + 5 H(+)(in) = a quinol + NAD(+) + 4 H(+)(out). Functionally, NDH-1 shuttles electrons from NADH, via FMN and iron-sulfur (Fe-S) centers, to quinones in the respiratory chain. The immediate electron acceptor for the enzyme in this species is believed to be a menaquinone. Couples the redox reaction to proton translocation (for every two electrons transferred, four hydrogen ions are translocated across the cytoplasmic membrane), and thus conserves the redox energy in a proton gradient. The sequence is that of NADH-quinone oxidoreductase subunit B from Bacillus mycoides (strain KBAB4) (Bacillus weihenstephanensis).